The chain runs to 102 residues: Aspartyl/glutamyl-tRNA(Asn/Gln) amidotransferase subunit C (102 aa).

The protein belongs to the GatC family. In terms of assembly, heterotrimer of A, B and C subunits.

It carries out the reaction L-glutamyl-tRNA(Gln) + L-glutamine + ATP + H2O = L-glutaminyl-tRNA(Gln) + L-glutamate + ADP + phosphate + H(+). The enzyme catalyses L-aspartyl-tRNA(Asn) + L-glutamine + ATP + H2O = L-asparaginyl-tRNA(Asn) + L-glutamate + ADP + phosphate + 2 H(+). Allows the formation of correctly charged Asn-tRNA(Asn) or Gln-tRNA(Gln) through the transamidation of misacylated Asp-tRNA(Asn) or Glu-tRNA(Gln) in organisms which lack either or both of asparaginyl-tRNA or glutaminyl-tRNA synthetases. The reaction takes place in the presence of glutamine and ATP through an activated phospho-Asp-tRNA(Asn) or phospho-Glu-tRNA(Gln). This chain is Aspartyl/glutamyl-tRNA(Asn/Gln) amidotransferase subunit C, found in Bordetella pertussis (strain Tohama I / ATCC BAA-589 / NCTC 13251).